The sequence spans 586 residues: NADH-quinone oxidoreductase subunit C/D 2 (586 aa).

Positions 1–173 (MKWVNKGTVE…RTDPPSHDFE (173 aa)) are NADH dehydrogenase I subunit C. Residues 197–586 (AELVLNWGPL…LDPVVGETDR (390 aa)) are NADH dehydrogenase I subunit D.

In the N-terminal section; belongs to the complex I 30 kDa subunit family. This sequence in the C-terminal section; belongs to the complex I 49 kDa subunit family. In terms of assembly, NDH-1 is composed of 13 different subunits. Subunits NuoB, CD, E, F, and G constitute the peripheral sector of the complex.

It is found in the cell inner membrane. The catalysed reaction is a quinone + NADH + 5 H(+)(in) = a quinol + NAD(+) + 4 H(+)(out). Functionally, NDH-1 shuttles electrons from NADH, via FMN and iron-sulfur (Fe-S) centers, to quinones in the respiratory chain. The immediate electron acceptor for the enzyme in this species is believed to be ubiquinone. Couples the redox reaction to proton translocation (for every two electrons transferred, four hydrogen ions are translocated across the cytoplasmic membrane), and thus conserves the redox energy in a proton gradient. The sequence is that of NADH-quinone oxidoreductase subunit C/D 2 (nuoC2) from Aquifex aeolicus (strain VF5).